We begin with the raw amino-acid sequence, 440 residues long: MTSIKEQAAISRLLSFLQEWDNAGKVARSHILDKFIETNQGKTAPELEQEFSQGASLFLVRLTTSLRITYMTDSCLEKLLRSIGIFLSAVSSNRYLIEFLEVGGVLTLLEILGLEKIKEEAKKESVKLLQVIANSGRTYKELICESYGVRSIAEFLAKSKSEETQEEVQVLLDSLVHGNPKYQNQVYKGLIALLPCESPKAQQLSLQTLRTAQPIIGTTHPSIVDCVLKVLGTMHLEVQYEAIELIKDLVGYDVRQALLKGLVALLIPSVKEISKLQAKILSDPSVLQLTPSLPMFLQQAAAAKAIGVLARNDMSIAEELLYLRVVRGLMAAMGNTDHSNSQRLASLTLECFVQMFPLVAEHVRKCMGEELYQLFLSNAEDLYMKIDSIQADILAANTVNVTKALCLHGSSYSMNTLYGSRDSAQMAYLTHFEEDVESKE.

The chain is Armadillo-like helical domain containing protein 1 from Homo sapiens (Human).